A 100-amino-acid polypeptide reads, in one-letter code: Small ribosomal subunit protein uS14 (100 aa).

Zn(2+) contacts are provided by cysteine 63, cysteine 66, cysteine 79, and cysteine 82.

Belongs to the universal ribosomal protein uS14 family. As to quaternary structure, part of the 30S ribosomal subunit. Contacts proteins S3 and S10. Zn(2+) is required as a cofactor.

In terms of biological role, binds 16S rRNA, required for the assembly of 30S particles and may also be responsible for determining the conformation of the 16S rRNA at the A site. This Legionella pneumophila (strain Paris) protein is Small ribosomal subunit protein uS14 (rpsN).